We begin with the raw amino-acid sequence, 79 residues long: Small ribosomal subunit protein bS18B (79 aa).

The segment covering 1–11 (MPRPRKADRTP) has biased composition (basic and acidic residues). The disordered stretch occupies residues 1–24 (MPRPRKADRTPARQRPNPLDRDGV).

It belongs to the bacterial ribosomal protein bS18 family. Part of the 30S ribosomal subunit. Forms a tight heterodimer with protein bS6.

In terms of biological role, binds as a heterodimer with protein bS6 to the central domain of the 16S rRNA, where it helps stabilize the platform of the 30S subunit. The protein is Small ribosomal subunit protein bS18B of Streptomyces coelicolor (strain ATCC BAA-471 / A3(2) / M145).